The primary structure comprises 397 residues: Putative F-box protein At2g04810 (397 aa).

The F-box domain occupies 20–68 (SDWSKLCPDVLRKIYETLRSPVDSHRAKIVCSNWYSVWKTCVKRPLCPL).

This Arabidopsis thaliana (Mouse-ear cress) protein is Putative F-box protein At2g04810.